The chain runs to 114 residues: uncharacterized protein (114 aa).

3 helical membrane-spanning segments follow: residues 21–41 (LASS…VCLF), 65–85 (GCFS…SALI), and 93–113 (LSVF…ILTD).

Its subcellular location is the membrane. This is an uncharacterized protein from Saccharomyces cerevisiae (strain ATCC 204508 / S288c) (Baker's yeast).